Consider the following 246-residue polypeptide: MLINRNIVALFALPFMASATASELSIGAGAAYNESPYRGYNENTKAIPLISYEGDSFYVRQTTLGFILSQSEKNELSLTASWMPLEFDPADNDDYAMQQLDKRDSTAMAGVAWYHHERWGTVKASAAADVLDNSNGWVGELSVFHKMQIGRLSLTPALGVLYYDENFSDYYYGISESESRRSGLASYSAQDAWVPYVSLTAKYPIGEHVVLMASAGYSELPEEITDSPMIDRNESFTFVTGVSWRF.

The first 21 residues, 1–21 (MLINRNIVALFALPFMASATA), serve as a signal peptide directing secretion.

It belongs to the MipA/OmpV family.

The protein localises to the cell outer membrane. The polypeptide is Putative outer membrane protein YiaT (yiaT) (Escherichia coli O157:H7).